The sequence spans 529 residues: Bifunctional purine biosynthesis protein PurH (529 aa).

Residues 1–148 (MQQRRPVRRA…KNHKDVAIVV (148 aa)) enclose the MGS-like domain.

It belongs to the PurH family.

The enzyme catalyses (6R)-10-formyltetrahydrofolate + 5-amino-1-(5-phospho-beta-D-ribosyl)imidazole-4-carboxamide = 5-formamido-1-(5-phospho-D-ribosyl)imidazole-4-carboxamide + (6S)-5,6,7,8-tetrahydrofolate. The catalysed reaction is IMP + H2O = 5-formamido-1-(5-phospho-D-ribosyl)imidazole-4-carboxamide. The protein operates within purine metabolism; IMP biosynthesis via de novo pathway; 5-formamido-1-(5-phospho-D-ribosyl)imidazole-4-carboxamide from 5-amino-1-(5-phospho-D-ribosyl)imidazole-4-carboxamide (10-formyl THF route): step 1/1. It functions in the pathway purine metabolism; IMP biosynthesis via de novo pathway; IMP from 5-formamido-1-(5-phospho-D-ribosyl)imidazole-4-carboxamide: step 1/1. This is Bifunctional purine biosynthesis protein PurH from Salmonella dublin (strain CT_02021853).